A 296-amino-acid chain; its full sequence is 4-hydroxybenzoate octaprenyltransferase (296 aa).

The next 8 helical transmembrane spans lie at 22 to 42, 46 to 66, 99 to 121, 139 to 159, 163 to 183, 211 to 231, 238 to 258, and 270 to 290; these read PIGI…SALG, WIVV…GCVI, LFAG…LVIW, FFAI…PMAY, LGEV…WAVA, FDVA…GGIG, PAFY…YTWI, and FLHN…DFLV.

Belongs to the UbiA prenyltransferase family. Mg(2+) serves as cofactor.

The protein localises to the cell inner membrane. The catalysed reaction is all-trans-octaprenyl diphosphate + 4-hydroxybenzoate = 4-hydroxy-3-(all-trans-octaprenyl)benzoate + diphosphate. The protein operates within cofactor biosynthesis; ubiquinone biosynthesis. In terms of biological role, catalyzes the prenylation of para-hydroxybenzoate (PHB) with an all-trans polyprenyl group. Mediates the second step in the final reaction sequence of ubiquinone-8 (UQ-8) biosynthesis, which is the condensation of the polyisoprenoid side chain with PHB, generating the first membrane-bound Q intermediate 3-octaprenyl-4-hydroxybenzoate. The protein is 4-hydroxybenzoate octaprenyltransferase of Dechloromonas aromatica (strain RCB).